The sequence spans 556 residues: MAAAAAAAAGPVFWRRLLGLLPGRPGLAALLGRLSDRLGRNPDRRRRRSPWLLLAPLLSPAVPVVTSPPCCLCAEGVHRFQWIRNLVPEFGVSSSHVRVLSSPAEFFELMKGQIKVAKRRVVMASLYLGIGPLEQELVDCLESTLEKSLQAKFPSGLRVSILLDFTRGSRGRKNSRTMLLPLLQRFPEQVRVSLFHTPNLRGLLRLLIPERFNETIGLQHIKVYLFDNNVILSGANLSDSYFTNRQDRYVFLQDCPEIADFFTELVDAVGDVSLQLQGDDTVQMVEGMVHPYKGDRAAYCRAANKRVMDVINSARMRQQMLHAQTFHSDPLLTQEDAAAAGDRRPAPDTWIYPLIQMKPFEIQIDEIVTETLLTEAERGAKVYLTTGYFNLTQAYMDLVLGTRAEYQILLASPEVNGFFGAKGVAGAIPAAYVHIERQFYSEVCSLGQQERVQLQEYWRRDWTFHAKGLWLYLAGSSLPCLTLIGSPNFGYRSVHRDLEAQIAIVTESRALQQQLHQEQEQLYRRAGVVSSATFEQPSRQVKLWVKMVTPLIKNFF.

The N-terminal 28 residues, 1–28, are a transit peptide targeting the mitochondrion; that stretch reads MAAAAAAAAGPVFWRRLLGLLPGRPGLA. S49 bears the Phosphoserine mark. Residue 124-131 coordinates ATP; it reads ASLYLGIG. PLD phosphodiesterase domains lie at 215–241 and 419–457; these read TIGL…SDSY and FGAK…LQEY. Residues H220, K222, and D227 contribute to the active site.

It belongs to the CDP-alcohol phosphatidyltransferase class-II family.

It localises to the mitochondrion. It carries out the reaction a CDP-1,2-diacyl-sn-glycerol + sn-glycerol 3-phosphate = a 1,2-diacyl-sn-glycero-3-phospho-(1'-sn-glycero-3'-phosphate) + CMP + H(+). It functions in the pathway phospholipid metabolism; phosphatidylglycerol biosynthesis; phosphatidylglycerol from CDP-diacylglycerol: step 1/2. Its activity is regulated as follows. Activated by calcium and magnesium and inhibited by other bivalent cations. Its function is as follows. Functions in the biosynthesis of the anionic phospholipids phosphatidylglycerol and cardiolipin. The chain is CDP-diacylglycerol--glycerol-3-phosphate 3-phosphatidyltransferase, mitochondrial (PGS1) from Bos taurus (Bovine).